We begin with the raw amino-acid sequence, 203 residues long: Sarcosine oxidase subunit gamma (203 aa).

Belongs to the SoxG family. In terms of assembly, heterotetramer composed of subunits alpha (SoxA), beta (SoxB), gamma (SoxG) and delta (SoxD).

The protein localises to the cytoplasm. The catalysed reaction is sarcosine + (6S)-5,6,7,8-tetrahydrofolate + O2 = (6R)-5,10-methylene-5,6,7,8-tetrahydrofolate + glycine + H2O2. It catalyses the reaction sarcosine + O2 + H2O = formaldehyde + glycine + H2O2. In terms of biological role, in the presence of tetrahydrofolate, catalyzes the oxidative demethylation of sarcosine to yield glycine, 5,10-methylenetetrahydrofolate and hydrogen peroxide. In the absence of tetrahydrofolate, catalyzes the oxidative demethylation of sarcosine to yield glycine, formaldehyde and hydrogen peroxide. The protein is Sarcosine oxidase subunit gamma (soxG) of Arthrobacter sp.